The sequence spans 411 residues: Tyrosine--tRNA ligase (411 aa).

The 'HIGH' region motif lies at 48–57 (PTAPDIHLGH). The 'KMSKS' region motif lies at 232 to 236 (KMSKS). K235 is a binding site for ATP. Residues 347 to 409 (VLLPKVLFSA…GKRRFLKIIF (63 aa)) form the S4 RNA-binding domain.

This sequence belongs to the class-I aminoacyl-tRNA synthetase family. TyrS type 2 subfamily. As to quaternary structure, homodimer.

It is found in the cytoplasm. The enzyme catalyses tRNA(Tyr) + L-tyrosine + ATP = L-tyrosyl-tRNA(Tyr) + AMP + diphosphate + H(+). In terms of biological role, catalyzes the attachment of tyrosine to tRNA(Tyr) in a two-step reaction: tyrosine is first activated by ATP to form Tyr-AMP and then transferred to the acceptor end of tRNA(Tyr). This Carboxydothermus hydrogenoformans (strain ATCC BAA-161 / DSM 6008 / Z-2901) protein is Tyrosine--tRNA ligase.